A 301-amino-acid chain; its full sequence is 5'-adenylylsulfate reductase-like 5 (301 aa).

Positions 1–21 are cleaved as a signal peptide; it reads MTRCAVVAAVAAVLLVAGAAA. In terms of domain architecture, Thioredoxin spans 51-164; that stretch reads CIRIEPSPPV…LVDFYKETTG (114 aa). N-linked (GlcNAc...) asparagine glycosylation occurs at N139. A helical transmembrane segment spans residues 201–221; that stretch reads FVLLAVLFIILKVAAHFVPIV. An N-linked (GlcNAc...) asparagine glycan is attached at N268.

It localises to the membrane. The sequence is that of 5'-adenylylsulfate reductase-like 5 (APRL5) from Oryza sativa subsp. japonica (Rice).